We begin with the raw amino-acid sequence, 87 residues long: Small ribosomal subunit protein bS18 (87 aa).

It belongs to the bacterial ribosomal protein bS18 family. In terms of assembly, part of the 30S ribosomal subunit. Forms a tight heterodimer with protein bS6.

Binds as a heterodimer with protein bS6 to the central domain of the 16S rRNA, where it helps stabilize the platform of the 30S subunit. The protein is Small ribosomal subunit protein bS18 of Nitratidesulfovibrio vulgaris (strain DSM 19637 / Miyazaki F) (Desulfovibrio vulgaris).